A 331-amino-acid chain; its full sequence is tRNA-modifying protein YgfZ (331 aa).

Positions 28 and 191 each coordinate folate.

Belongs to the tRNA-modifying YgfZ family.

It is found in the cytoplasm. In terms of biological role, folate-binding protein involved in regulating the level of ATP-DnaA and in the modification of some tRNAs. It is probably a key factor in regulatory networks that act via tRNA modification, such as initiation of chromosomal replication. This chain is tRNA-modifying protein YgfZ, found in Edwardsiella ictaluri (strain 93-146).